Consider the following 463-residue polypeptide: Methionine aminopeptidase 2-2 (463 aa).

The interval 1–107 (MGAKTFEGGD…VPLSQLFPDG (107 aa)) is disordered. A compositionally biased stretch (acidic residues) spans 37–53 (EDGDGEFGTDDDDDGDG). Residues 69–83 (PKKRKRSKKKKSNKK) show a composition bias toward basic residues. H215 is a binding site for substrate. Residues D236, D247, and H316 each coordinate a divalent metal cation. Residue H324 participates in substrate binding. Residues E349 and E444 each contribute to the a divalent metal cation site.

Belongs to the peptidase M24A family. Methionine aminopeptidase eukaryotic type 2 subfamily. Co(2+) serves as cofactor. The cofactor is Zn(2+). Requires Mn(2+) as cofactor. It depends on Fe(2+) as a cofactor.

It is found in the cytoplasm. The catalysed reaction is Release of N-terminal amino acids, preferentially methionine, from peptides and arylamides.. In terms of biological role, cotranslationally removes the N-terminal methionine from nascent proteins. The N-terminal methionine is often cleaved when the second residue in the primary sequence is small and uncharged (Met-Ala-, Cys, Gly, Pro, Ser, Thr, or Val). The protein is Methionine aminopeptidase 2-2 of Talaromyces marneffei (strain ATCC 18224 / CBS 334.59 / QM 7333) (Penicillium marneffei).